Consider the following 373-residue polypeptide: Spermidine/putrescine import ATP-binding protein PotA (373 aa).

In terms of domain architecture, ABC transporter spans I5–I235. G37–T44 contributes to the ATP binding site.

Belongs to the ABC transporter superfamily. Spermidine/putrescine importer (TC 3.A.1.11.1) family. As to quaternary structure, the complex is composed of two ATP-binding proteins (PotA), two transmembrane proteins (PotB and PotC) and a solute-binding protein (PotD).

The protein resides in the cell inner membrane. It catalyses the reaction ATP + H2O + polyamine-[polyamine-binding protein]Side 1 = ADP + phosphate + polyamineSide 2 + [polyamine-binding protein]Side 1.. Functionally, part of the ABC transporter complex PotABCD involved in spermidine/putrescine import. Responsible for energy coupling to the transport system. This Protochlamydia amoebophila (strain UWE25) protein is Spermidine/putrescine import ATP-binding protein PotA.